The sequence spans 1051 residues: Carbamoyl phosphate synthase large chain (1051 aa).

The tract at residues 1–399 (MKETPKKVLV…SLQKAVRMLD (399 aa)) is carboxyphosphate synthetic domain. ATP contacts are provided by R127, R167, G173, G174, K206, L208, E213, G239, V240, H241, Q282, and E296. One can recognise an ATP-grasp 1 domain in the interval 131 to 325 (RETMIENNLP…LAYVSAKLAL (195 aa)). Q282, E296, and N298 together coordinate Mg(2+). Positions 282, 296, and 298 each coordinate Mn(2+). Residues 400–548 (IGEPGVVGGK…LTYNGTEDDL (149 aa)) are oligomerization domain. A carbamoyl phosphate synthetic domain region spans residues 549–930 (EFSQGNKLLM…LKSWLSSIPN (382 aa)). An ATP-grasp 2 domain is found at 673–863 (SKLLDKLGIS…LINESMKAIF (191 aa)). R709, K748, I750, E755, G779, V780, H781, S782, Q822, and E834 together coordinate ATP. Mg(2+) contacts are provided by Q822, E834, and N836. The Mn(2+) site is built by Q822, E834, and N836. The 122-residue stretch at 930 to 1051 (NRIPNKNGIA…FEISEYGGGI (122 aa)) folds into the MGS-like domain. The tract at residues 931 to 1051 (RIPNKNGIAL…FEISEYGGGI (121 aa)) is allosteric domain.

Belongs to the CarB family. In terms of assembly, composed of two chains; the small (or glutamine) chain promotes the hydrolysis of glutamine to ammonia, which is used by the large (or ammonia) chain to synthesize carbamoyl phosphate. Tetramer of heterodimers (alpha,beta)4. It depends on Mg(2+) as a cofactor. Mn(2+) is required as a cofactor.

The catalysed reaction is hydrogencarbonate + L-glutamine + 2 ATP + H2O = carbamoyl phosphate + L-glutamate + 2 ADP + phosphate + 2 H(+). It catalyses the reaction hydrogencarbonate + NH4(+) + 2 ATP = carbamoyl phosphate + 2 ADP + phosphate + 2 H(+). It participates in amino-acid biosynthesis; L-arginine biosynthesis; carbamoyl phosphate from bicarbonate: step 1/1. It functions in the pathway pyrimidine metabolism; UMP biosynthesis via de novo pathway; (S)-dihydroorotate from bicarbonate: step 1/3. Its function is as follows. Large subunit of the glutamine-dependent carbamoyl phosphate synthetase (CPSase). CPSase catalyzes the formation of carbamoyl phosphate from the ammonia moiety of glutamine, carbonate, and phosphate donated by ATP, constituting the first step of 2 biosynthetic pathways, one leading to arginine and/or urea and the other to pyrimidine nucleotides. The large subunit (synthetase) binds the substrates ammonia (free or transferred from glutamine from the small subunit), hydrogencarbonate and ATP and carries out an ATP-coupled ligase reaction, activating hydrogencarbonate by forming carboxy phosphate which reacts with ammonia to form carbamoyl phosphate. In Saccharolobus islandicus (strain M.16.4 / Kamchatka #3) (Sulfolobus islandicus), this protein is Carbamoyl phosphate synthase large chain.